The sequence spans 357 residues: Protein phosphatase 1 regulatory subunit 42 (357 aa).

7 LRR repeats span residues 29–50 (KITH…SLCR), 51–72 (NLSV…NYTT), 73–94 (NLTH…SSLK), 95–116 (KLEK…EGLE), 117–138 (ELRE…LFDP), 147–168 (SLST…EILE), and 169–190 (NLNH…ELLL). The region spanning 204–242 (NPVCLKPKYRDKLILTSKSLEFLDGKEIKDMERQFLMNW) is the LRRCT domain. Residues 329–357 (ESSLTKNDIHEPHLLQNPKVKENLSEKKE) are disordered. Residues 335 to 357 (NDIHEPHLLQNPKVKENLSEKKE) are compositionally biased toward basic and acidic residues.

Interacts with PPP1CC isoform gamma-2; the interaction is direct. Interacts with actin, dynein, KIF5B, KIFC1 and tubulin. Associates with microtubules. In terms of processing, phosphorylated; during the first round of spermatogenesis with a marginal increase at 21 days after birth. In terms of tissue distribution, testis-specific. Expressed in spermatids (at protein level). Testis-specific.

It localises to the cytoplasm. The protein resides in the cytoskeleton. The protein localises to the microtubule organizing center. Its subcellular location is the centrosome. In terms of biological role, regulates phosphatase activity of protein phosphatase 1 (PP1) complexes in the testis. In Mus musculus (Mouse), this protein is Protein phosphatase 1 regulatory subunit 42 (Ppp1r42).